Here is a 775-residue protein sequence, read N- to C-terminus: Subtilisin-like protease SBT4.1 (775 aa).

A signal peptide spans 1 to 23 (MAIAFHTFLLQLLLFFFASFAEA). An N-linked (GlcNAc...) asparagine glycan is attached at Asn24. A propeptide spans 24 to 106 (NDSRKTYLVQ…VSRSRNLKLQ (83 aa)) (activation peptide). The 77-residue stretch at 29 to 105 (TYLVQMKVGG…EVSRSRNLKL (77 aa)) folds into the Inhibitor I9 domain. The Peptidase S8 domain occupies 110–606 (SWDFMNLTLK…SGHLNATKVR (497 aa)). Asn115 and Asn126 each carry an N-linked (GlcNAc...) asparagine glycan. Asp136 functions as the Charge relay system in the catalytic mechanism. Asn162 carries N-linked (GlcNAc...) asparagine glycosylation. His196 functions as the Charge relay system in the catalytic mechanism. The PA domain maps to 365–459 (FYPLLNEKAP…FLDEQKKGKL (95 aa)). N-linked (GlcNAc...) asparagine glycosylation occurs at Asn437. The active-site Charge relay system is Ser551. Asn601 carries an N-linked (GlcNAc...) asparagine glycan.

It belongs to the peptidase S8 family. The C-terminal propeptide is autocleaved.

It is found in the secreted. In Arabidopsis thaliana (Mouse-ear cress), this protein is Subtilisin-like protease SBT4.1.